Here is a 288-residue protein sequence, read N- to C-terminus: Pantothenate synthetase (288 aa).

31–38 (MGNLHRGH) provides a ligand contact to ATP. Catalysis depends on histidine 38, which acts as the Proton donor. Glutamine 62 is a binding site for (R)-pantoate. Glutamine 62 contacts beta-alanine. 150 to 153 (GQKD) serves as a coordination point for ATP. Glutamine 156 serves as a coordination point for (R)-pantoate. Residues isoleucine 179 and 187–190 (LSSR) each bind ATP.

Belongs to the pantothenate synthetase family. Homodimer.

Its subcellular location is the cytoplasm. It carries out the reaction (R)-pantoate + beta-alanine + ATP = (R)-pantothenate + AMP + diphosphate + H(+). It functions in the pathway cofactor biosynthesis; (R)-pantothenate biosynthesis; (R)-pantothenate from (R)-pantoate and beta-alanine: step 1/1. Catalyzes the condensation of pantoate with beta-alanine in an ATP-dependent reaction via a pantoyl-adenylate intermediate. In Wigglesworthia glossinidia brevipalpis, this protein is Pantothenate synthetase.